A 473-amino-acid chain; its full sequence is ATP synthase subunit beta (473 aa).

Residue 158-165 participates in ATP binding; sequence GGAGVGKT.

Belongs to the ATPase alpha/beta chains family. In terms of assembly, F-type ATPases have 2 components, CF(1) - the catalytic core - and CF(0) - the membrane proton channel. CF(1) has five subunits: alpha(3), beta(3), gamma(1), delta(1), epsilon(1). CF(0) has three main subunits: a(1), b(2) and c(9-12). The alpha and beta chains form an alternating ring which encloses part of the gamma chain. CF(1) is attached to CF(0) by a central stalk formed by the gamma and epsilon chains, while a peripheral stalk is formed by the delta and b chains.

The protein localises to the cell membrane. It carries out the reaction ATP + H2O + 4 H(+)(in) = ADP + phosphate + 5 H(+)(out). Functionally, produces ATP from ADP in the presence of a proton gradient across the membrane. The catalytic sites are hosted primarily by the beta subunits. The sequence is that of ATP synthase subunit beta from Priestia megaterium (strain ATCC 12872 / QMB1551) (Bacillus megaterium).